A 207-amino-acid chain; its full sequence is Putative 3-methyladenine DNA glycosylase (207 aa).

The span at 182–193 (PAPAGARAARAP) shows a compositional bias: low complexity. A disordered region spans residues 182–207 (PAPAGARAARAPAPAPRPRRPRGSGP). Basic residues predominate over residues 198 to 207 (RPRRPRGSGP).

Belongs to the DNA glycosylase MPG family.

This is Putative 3-methyladenine DNA glycosylase from Anaeromyxobacter dehalogenans (strain 2CP-C).